The chain runs to 319 residues: Cytochrome c biogenesis protein CcsA (319 aa).

The next 8 helical transmembrane spans lie at 14 to 34 (AFGG…FPGI), 36 to 56 (GLNR…TLTL), 69 to 89 (SNLY…HLFI), 97 to 117 (LIGA…SLAL), 142 to 162 (IMML…LFLI), 227 to 247 (TIGL…VWAN), 254 to 274 (WSWD…AAYL), and 288 to 308 (AILA…VNFL).

This sequence belongs to the CcmF/CycK/Ccl1/NrfE/CcsA family. In terms of assembly, may interact with Ccs1.

It localises to the plastid. The protein resides in the chloroplast thylakoid membrane. Functionally, required during biogenesis of c-type cytochromes (cytochrome c6 and cytochrome f) at the step of heme attachment. This is Cytochrome c biogenesis protein CcsA from Pyropia yezoensis (Susabi-nori).